Here is a 635-residue protein sequence, read N- to C-terminus: Threonine--tRNA ligase (635 aa).

The TGS domain maps to M1–T61. The tract at residues D242 to P532 is catalytic. 3 residues coordinate Zn(2+): C333, H384, and H509.

It belongs to the class-II aminoacyl-tRNA synthetase family. Homodimer. Requires Zn(2+) as cofactor.

It is found in the cytoplasm. The catalysed reaction is tRNA(Thr) + L-threonine + ATP = L-threonyl-tRNA(Thr) + AMP + diphosphate + H(+). Functionally, catalyzes the attachment of threonine to tRNA(Thr) in a two-step reaction: L-threonine is first activated by ATP to form Thr-AMP and then transferred to the acceptor end of tRNA(Thr). Also edits incorrectly charged L-seryl-tRNA(Thr). This is Threonine--tRNA ligase from Clostridium botulinum (strain ATCC 19397 / Type A).